The sequence spans 697 residues: MTDLSLYRNIGIFAHVDAGKTTTTERILKLTGKIHKLGEVHEGESTTDFMEQEAERGITIQSAAVTCEWKGHRLNVIDTPGHVDFTVEVYRSLKVLDGGIGVFCGSGGVEPQSETNWRYANDSEVARVIFVNKLDRVGADFLRVVEQVKKVLGANPLVMTLPIGREDTFTGVVDVLTKKAYIWDDSGLPENYEVTDVPADMVDEVDMYHEQLVETAVEQDDDLMMAYMEGEVPTVEQLKKCIRKGTRDLTFFPTFCGSAFKNKGVQLVLDAVVDYLPSPTEVDPQPLTDEEGNETGEHALVSADEPLRALAFKIMDDRFGALTFIRIYSGRMEKGMTVLNSFTGKTERIGRMVEMQANDRNEITSAQAGDILAVVGMKNVQTGHTLCDPKHPCTLEAMVFPEPVISIAVAPKDKTGSEKMGVAIGKMVAEDPSFRVETDEDSGETILKGMGELHLDIKVDILKRTYGVELNVGKPQVAYRETITQAIEDSYTHKKQSGGSGQFGKIDYRIRPGEPGTGFKFSSVVVGGNVPKEFFPAIEKGFSTMMAEGPLAGYPVLDVEIELYDGSYHAVDSSAVAFEIAAKGAFRQSMPKAGPQIIEPIMKVDVFTPEDHVGDVIGDLNRRRGMIKDQEPGVTGVRIKADVPLSEMFGYIGHLRTMTSGRGQFSMEFSHYLPCPNAVAEEVIAEAKKRKEEKAKK.

One can recognise a tr-type G domain in the interval 5–280 (SLYRNIGIFA…AVVDYLPSPT (276 aa)). Residues 14 to 21 (AHVDAGKT), 78 to 82 (DTPGH), and 132 to 135 (NKLD) contribute to the GTP site.

This sequence belongs to the TRAFAC class translation factor GTPase superfamily. Classic translation factor GTPase family. EF-G/EF-2 subfamily.

The protein localises to the cytoplasm. Its function is as follows. Catalyzes the GTP-dependent ribosomal translocation step during translation elongation. During this step, the ribosome changes from the pre-translocational (PRE) to the post-translocational (POST) state as the newly formed A-site-bound peptidyl-tRNA and P-site-bound deacylated tRNA move to the P and E sites, respectively. Catalyzes the coordinated movement of the two tRNA molecules, the mRNA and conformational changes in the ribosome. The sequence is that of Elongation factor G 2 from Saccharophagus degradans (strain 2-40 / ATCC 43961 / DSM 17024).